We begin with the raw amino-acid sequence, 225 residues long: Uridylate kinase (225 aa).

9–10 is an ATP binding site; that stretch reads GS. G44 is a binding site for UMP. ATP contacts are provided by G45 and R49. Residues D66 and 114–120 each bind UMP; that span reads THPGHTT. Positions 140, 141, 146, and 149 each coordinate ATP.

The protein belongs to the UMP kinase family. In terms of assembly, homohexamer.

It is found in the cytoplasm. The enzyme catalyses UMP + ATP = UDP + ADP. The protein operates within pyrimidine metabolism; CTP biosynthesis via de novo pathway; UDP from UMP (UMPK route): step 1/1. With respect to regulation, inhibited by UTP. Its function is as follows. Catalyzes the reversible phosphorylation of UMP to UDP. In Thermococcus gammatolerans (strain DSM 15229 / JCM 11827 / EJ3), this protein is Uridylate kinase.